A 114-amino-acid polypeptide reads, in one-letter code: MICOS complex subunit MIC12 (114 aa).

A helical membrane pass occupies residues 4 to 26; the sequence is IAKLGSFTLVSGVVATSCYYYFI.

This sequence belongs to the MICOS complex subunit Mic12 family. As to quaternary structure, component of the mitochondrial contact site and cristae organizing system (MICOS) complex.

The protein localises to the mitochondrion inner membrane. Functionally, component of the MICOS complex, a large protein complex of the mitochondrial inner membrane that plays crucial roles in the maintenance of crista junctions, inner membrane architecture, and formation of contact sites to the outer membrane. The protein is MICOS complex subunit MIC12 (AIM5) of Candida glabrata (strain ATCC 2001 / BCRC 20586 / JCM 3761 / NBRC 0622 / NRRL Y-65 / CBS 138) (Yeast).